Consider the following 397-residue polypeptide: Acetate kinase (397 aa).

Position 7 (Asn-7) interacts with Mg(2+). Residue Lys-14 coordinates ATP. Substrate is bound at residue Arg-90. The active-site Proton donor/acceptor is Asp-147. Residues 207-211 (HLGNG), 282-284 (DFR), and 330-334 (GLGEN) each bind ATP. Glu-383 contacts Mg(2+).

Belongs to the acetokinase family. Homodimer. Mg(2+) serves as cofactor. It depends on Mn(2+) as a cofactor.

It is found in the cytoplasm. The enzyme catalyses acetate + ATP = acetyl phosphate + ADP. It participates in metabolic intermediate biosynthesis; acetyl-CoA biosynthesis; acetyl-CoA from acetate: step 1/2. Its function is as follows. Catalyzes the formation of acetyl phosphate from acetate and ATP. Can also catalyze the reverse reaction. In Clostridium botulinum (strain Kyoto / Type A2), this protein is Acetate kinase.